A 464-amino-acid polypeptide reads, in one-letter code: Na(+)/H(+) antiporter NhaA 2 (464 aa).

The next 11 helical transmembrane spans lie at 53-73 (VGGIILLVAAAAALIWANSPW), 96-116 (LTLGAWAADGLLAIFFLVVGL), 134-154 (ALPIAAAVGGMVVPALIFVLV), 165-185 (GWAIPTATDIAFAVAVLAVIS), 195-215 (FLLTLAVVDDLLAITVIAVFY), 219-239 (IKAWALALAVVPLALFTVCAQ), 257-277 (VLVHESGVHATVAGVLLGFAV), 313-333 (IAIPVFAFFAAGVSIGGLSGL), 340-360 (PITLGIVLGLVAGKPIGILVT), 378-398 (WVDVLGMSMLAGIGFTVSLLI), and 412-432 (FVKIGVLSGSLLAASLAAIVL).

The protein belongs to the NhaA Na(+)/H(+) (TC 2.A.33) antiporter family.

Its subcellular location is the cell membrane. It catalyses the reaction Na(+)(in) + 2 H(+)(out) = Na(+)(out) + 2 H(+)(in). Na(+)/H(+) antiporter that extrudes sodium in exchange for external protons. The protein is Na(+)/H(+) antiporter NhaA 2 of Mycolicibacterium vanbaalenii (strain DSM 7251 / JCM 13017 / BCRC 16820 / KCTC 9966 / NRRL B-24157 / PYR-1) (Mycobacterium vanbaalenii).